A 78-amino-acid polypeptide reads, in one-letter code: Conotoxin 1 (78 aa).

Positions 1–22 (MKLTCMMFVAVLFLTASVFITA) are cleaved as a signal peptide. The propeptide occupies 23–51 (DDSRNGIENLPRMRRHEMKNPKASKLNKR). Q52 is modified (pyrrolidone carboxylic acid). Intrachain disulfides connect C53–C69, C60–C73, and C68–C77.

It belongs to the conotoxin O1 superfamily. In terms of tissue distribution, expressed by the venom duct.

It is found in the secreted. This Conus imperialis (Imperial cone) protein is Conotoxin 1.